A 154-amino-acid chain; its full sequence is Transcriptional repressor NrdR (154 aa).

A zinc finger spans residues 3-34 (CPFCGHAATQVIDTRMSEEGDTVRRRRRCESC). Positions 49–139 (PAVVKKNGSR…VYRSFEDLAE (91 aa)) constitute an ATP-cone domain.

This sequence belongs to the NrdR family. Zn(2+) serves as cofactor.

Functionally, negatively regulates transcription of bacterial ribonucleotide reductase nrd genes and operons by binding to NrdR-boxes. This Ralstonia pickettii (strain 12J) protein is Transcriptional repressor NrdR.